The sequence spans 445 residues: SVP1-like protein 2 (445 aa).

WD repeat units lie at residues 218–258 (AHKA…LLKE) and 263–302 (LDRA…EGTL). A disordered region spans residues 301-321 (TLNPANPEDHQSSGSNGHIKA). The segment covering 312-321 (SSGSNGHIKA) has biased composition (polar residues).

It belongs to the WD repeat PROPPIN family.

Its subcellular location is the vacuole membrane. The protein resides in the cytoplasmic vesicle membrane. Functionally, involved in mitochondrial or peroxisomal functions and amino acid signaling pathways. The polypeptide is SVP1-like protein 2 (HSV2) (Candida glabrata (strain ATCC 2001 / BCRC 20586 / JCM 3761 / NBRC 0622 / NRRL Y-65 / CBS 138) (Yeast)).